Reading from the N-terminus, the 333-residue chain is Ketol-acid reductoisomerase (NADP(+)) (333 aa).

The 181-residue stretch at 2-182 folds into the KARI N-terminal Rossmann domain; the sequence is ANIYYDADCD…GGGRAGILET (181 aa). Residues 25–28, Lys-48, Ser-51, Ser-53, and 83–86 contribute to the NADP(+) site; these read YGSQ and DTIQ. His-108 is a catalytic residue. Gly-134 contributes to the NADP(+) binding site. The KARI C-terminal knotted domain maps to 183-331; it reads SFREETETDL…KKLRSMMKWL (149 aa). Residues Asp-191, Glu-195, Glu-227, and Glu-231 each contribute to the Mg(2+) site. Residue Ser-252 coordinates substrate.

The protein belongs to the ketol-acid reductoisomerase family. It depends on Mg(2+) as a cofactor.

It catalyses the reaction (2R)-2,3-dihydroxy-3-methylbutanoate + NADP(+) = (2S)-2-acetolactate + NADPH + H(+). The catalysed reaction is (2R,3R)-2,3-dihydroxy-3-methylpentanoate + NADP(+) = (S)-2-ethyl-2-hydroxy-3-oxobutanoate + NADPH + H(+). It functions in the pathway amino-acid biosynthesis; L-isoleucine biosynthesis; L-isoleucine from 2-oxobutanoate: step 2/4. The protein operates within amino-acid biosynthesis; L-valine biosynthesis; L-valine from pyruvate: step 2/4. Its function is as follows. Involved in the biosynthesis of branched-chain amino acids (BCAA). Catalyzes an alkyl-migration followed by a ketol-acid reduction of (S)-2-acetolactate (S2AL) to yield (R)-2,3-dihydroxy-isovalerate. In the isomerase reaction, S2AL is rearranged via a Mg-dependent methyl migration to produce 3-hydroxy-3-methyl-2-ketobutyrate (HMKB). In the reductase reaction, this 2-ketoacid undergoes a metal-dependent reduction by NADPH to yield (R)-2,3-dihydroxy-isovalerate. In Leptospira borgpetersenii serovar Hardjo-bovis (strain JB197), this protein is Ketol-acid reductoisomerase (NADP(+)).